Here is a 66-residue protein sequence, read N- to C-terminus: Large ribosomal subunit protein bL32 (66 aa).

Residues 1 to 18 (MAIVPKRKTSKQRKHKRR) are compositionally biased toward basic residues. A disordered region spans residues 1 to 21 (MAIVPKRKTSKQRKHKRRTND).

It belongs to the bacterial ribosomal protein bL32 family.

The sequence is that of Large ribosomal subunit protein bL32 from Mycoplasmopsis agalactiae (strain NCTC 10123 / CIP 59.7 / PG2) (Mycoplasma agalactiae).